The sequence spans 2040 residues: Apolipoprotein(a) (2040 aa).

Residues 1 to 19 (MEHKEVVLLLLLFLKSAAP) form the signal peptide. 10 Kringle domains span residues 27-105 (DCYH…LTQC), 141-219 (ECYH…LTQC), 255-333 (ECYH…LTQC), 369-447 (ECYH…LTQC), 483-561 (ECYH…LTQC), 597-675 (ECYH…LTQC), 711-789 (ECYH…LTQC), 825-903 (ECYH…LTQC), 939-1017 (ECYH…LTRC), and 1053-1131 (DCYY…LTQC). 30 disulfides stabilise this stretch: Cys28–Cys105, Cys49–Cys88, Cys77–Cys100, Cys142–Cys219, Cys163–Cys202, Cys191–Cys214, Cys256–Cys333, Cys277–Cys316, Cys305–Cys328, Cys370–Cys447, Cys391–Cys430, Cys419–Cys442, Cys484–Cys561, Cys505–Cys544, Cys533–Cys556, Cys598–Cys675, Cys619–Cys658, Cys647–Cys670, Cys712–Cys789, Cys733–Cys772, Cys761–Cys784, Cys826–Cys903, Cys847–Cys886, Cys875–Cys898, Cys940–Cys1017, Cys961–Cys1000, Cys989–Cys1012, Cys1054–Cys1131, Cys1075–Cys1114, and Cys1103–Cys1126. A glycan (N-linked (GlcNAc...) asparagine) is linked at Asn61. N-linked (GlcNAc...) asparagine glycosylation occurs at Asn101. Asn215 is a glycosylation site (N-linked (GlcNAc...) asparagine). N-linked (GlcNAc...) asparagine glycosylation is present at Asn329. The N-linked (GlcNAc...) asparagine glycan is linked to Asn443. An N-linked (GlcNAc...) asparagine glycan is attached at Asn557. The N-linked (GlcNAc...) asparagine glycan is linked to Asn671. A glycan (N-linked (GlcNAc...) asparagine) is linked at Asn785. Asn899 carries N-linked (GlcNAc...) asparagine glycosylation. An N-linked (GlcNAc...) asparagine glycan is attached at Asn1013. Residue Asn1127 is glycosylated (N-linked (GlcNAc...) asparagine). The interval 1147–1166 (DPSTEASSEEAPTEQSPGVQ) is disordered. Kringle domains follow at residues 1167–1245 (DCYH…LTQC) and 1273–1351 (DCYH…LTQC). 6 disulfide bridges follow: Cys1168/Cys1245, Cys1189/Cys1228, Cys1217/Cys1240, Cys1274/Cys1351, Cys1295/Cys1334, and Cys1323/Cys1346. The N-linked (GlcNAc...) asparagine glycan is linked to Asn1241. Asn1347 and Asn1381 each carry an N-linked (GlcNAc...) asparagine glycan. The disordered stretch occupies residues 1365 to 1388 (VPVPSTELPSEEAPTENSTGVQDC). The region spanning 1387–1465 (DCYRGDGQSY…RWEYCNLTRC (79 aa)) is the Kringle 13 domain. 3 cysteine pairs are disulfide-bonded: Cys1388/Cys1465, Cys1409/Cys1448, and Cys1437/Cys1460. Asn1461 carries an N-linked (GlcNAc...) asparagine glycan. The segment at 1476–1497 (PTVAPVPSTEAPSEQAPPEKSP) is disordered. Kringle domains lie at 1501–1579 (DCYH…LTQC), 1615–1693 (QCYH…LTRC), and 1719–1799 (DCMF…IPLC). 10 disulfides stabilise this stretch: Cys1502-Cys1579, Cys1523-Cys1562, Cys1551-Cys1574, Cys1616-Cys1693, Cys1637-Cys1676, Cys1665-Cys1688, Cys1720-Cys1799, Cys1741-Cys1782, Cys1770-Cys1794, and Cys1846-Cys1862. Asn1575 carries an N-linked (GlcNAc...) asparagine glycan. Asn1689 carries an N-linked (GlcNAc...) asparagine glycan. The region spanning 1820–2038 (IVGGCVAHPH…FVTWIEGMMR (219 aa)) is the Peptidase S1 domain. Active-site charge relay system residues include His1861 and Asp1904. Disulfide bonds link Cys1938–Cys1996, Cys1968–Cys1975, and Cys1986–Cys2014. Ser1990 functions as the Charge relay system in the catalytic mechanism.

This sequence belongs to the peptidase S1 family. Plasminogen subfamily. As to quaternary structure, disulfide-linked to apo-B100. Binds to fibronectin and decorin. N- and O-glycosylated. The N-glycans are complex biantennary structures present in either a mono- or disialylated state. The O-glycans are mostly (80%) represented by the monosialylated core type I structure, NeuNAcalpha2-3Galbeta1-3GalNAc, with smaller amounts of disialylated and non-sialylated O-glycans also detected.

Functionally, apo(a) is the main constituent of lipoprotein(a) (Lp(a)). It has serine proteinase activity and is able of autoproteolysis. Inhibits tissue-type plasminogen activator 1. Lp(a) may be a ligand for megalin/Gp 330. This Homo sapiens (Human) protein is Apolipoprotein(a) (LPA).